Consider the following 409-residue polypeptide: Serine hydroxymethyltransferase (409 aa).

(6S)-5,6,7,8-tetrahydrofolate contacts are provided by residues Leu116 and 120–122 (GHL). Lys225 carries the N6-(pyridoxal phosphate)lysine modification.

The protein belongs to the SHMT family. Homodimer. Requires pyridoxal 5'-phosphate as cofactor.

It localises to the cytoplasm. It catalyses the reaction (6R)-5,10-methylene-5,6,7,8-tetrahydrofolate + glycine + H2O = (6S)-5,6,7,8-tetrahydrofolate + L-serine. Its pathway is one-carbon metabolism; tetrahydrofolate interconversion. It participates in amino-acid biosynthesis; glycine biosynthesis; glycine from L-serine: step 1/1. Catalyzes the reversible interconversion of serine and glycine with tetrahydrofolate (THF) serving as the one-carbon carrier. This reaction serves as the major source of one-carbon groups required for the biosynthesis of purines, thymidylate, methionine, and other important biomolecules. Also exhibits THF-independent aldolase activity toward beta-hydroxyamino acids, producing glycine and aldehydes, via a retro-aldol mechanism. The polypeptide is Serine hydroxymethyltransferase (Acholeplasma laidlawii (strain PG-8A)).